The sequence spans 290 residues: ATP synthase gamma chain (290 aa).

This sequence belongs to the ATPase gamma chain family. As to quaternary structure, F-type ATPases have 2 components, CF(1) - the catalytic core - and CF(0) - the membrane proton channel. CF(1) has five subunits: alpha(3), beta(3), gamma(1), delta(1), epsilon(1). CF(0) has three main subunits: a, b and c.

Its subcellular location is the cell membrane. Functionally, produces ATP from ADP in the presence of a proton gradient across the membrane. The gamma chain is believed to be important in regulating ATPase activity and the flow of protons through the CF(0) complex. The chain is ATP synthase gamma chain from Listeria innocua serovar 6a (strain ATCC BAA-680 / CLIP 11262).